A 405-amino-acid polypeptide reads, in one-letter code: tRNA N6-adenosine threonylcarbamoyltransferase, mitochondrial (405 aa).

The N-terminal 19 residues, 1-19 (MAKYISNLSRIAVVRGRVS), are a transit peptide targeting the mitochondrion. His-138 and His-142 together coordinate a divalent metal cation. Residues 160-164 (LISGG), Asp-193, Gly-213, Glu-217, 320-321 (SN), and Thr-348 contribute to the substrate site. Asp-349 is a binding site for a divalent metal cation.

It belongs to the KAE1 / TsaD family. In terms of assembly, monomer. A divalent metal cation is required as a cofactor.

Its subcellular location is the mitochondrion. It catalyses the reaction L-threonylcarbamoyladenylate + adenosine(37) in tRNA = N(6)-L-threonylcarbamoyladenosine(37) in tRNA + AMP + H(+). In terms of biological role, required for the formation of a threonylcarbamoyl group on adenosine at position 37 (t(6)A37) in mitochondrial tRNAs that read codons beginning with adenine. Probably involved in the transfer of the threonylcarbamoyl moiety of threonylcarbamoyl-AMP (TC-AMP) to the N6 group of A37. Involved in mitochondrial genome maintenance. The sequence is that of tRNA N6-adenosine threonylcarbamoyltransferase, mitochondrial from Xenopus tropicalis (Western clawed frog).